A 181-amino-acid chain; its full sequence is Capsid protein VP4 (181 aa).

It is found in the virion. Its function is as follows. VP4 self-assembles to form, together with capsid protein VP10, an icosahedral caspid of 87 nm in diameter, with a T=43 symmetry and composed of 420 hexamers and 12 pentamers. VP4 proteins arrange into hexons, while VP10 proteins form the pentameric densities located at the 5-fold axes in the virion. The stoichiometry of VP4:VP10 is 42:1. The protein is Capsid protein VP4 of Sulfolobus (SPV1).